Consider the following 639-residue polypeptide: CD2-associated protein (639 aa).

The SH3 1; truncated domain occupies 1–59 (MVDYIVEYDYDAVHDDELTIRVGEIIRNVKKLQEEGWLEGELNGRRGMFPDNFVKEIKR). Positions 1–175 (MVDYIVEYDY…EVTDDGETHE (175 aa)) are interaction with ANLN and localization to the midbody. Lys-58 is covalently cross-linked (Glycyl lysine isopeptide (Lys-Gly) (interchain with G-Cter in SUMO2)). 3 positions are modified to phosphoserine: Ser-67, Ser-80, and Ser-86. Residues 108–167 (TKKRQCKVLFEYIPQNEDELELKVGDIIDINEEVEEGWWSGTLNNKLGLFPSNFVKELEV) form the SH3 2 domain. Positions 168 to 177 (TDDGETHEAQ) are enriched in basic and acidic residues. Residues 168–209 (TDDGETHEAQDDSETVLAGPTSPIPSLGNVSETASGSVTQPK) are disordered. The span at 195-207 (GNVSETASGSVTQ) shows a compositional bias: polar residues. Ser-224 is subject to Phosphoserine. A disordered region spans residues 227 to 256 (LRTRTSSSETEEKKPEKPLILQSLGPKTQS). Residues 269 to 330 (KAKEYCRTLF…PDNFAVQINE (62 aa)) enclose the SH3 3 domain. The segment at 333 to 428 (KDFPKPKKPP…PPPPIAKING (96 aa)) is disordered. Short sequence motifs (SH3-binding) lie at residues 336–352 (PKPKKPPPPAKAPAPKP), 378–397 (KPSKPAAPQVPPKKPTPPTK), and 410–422 (PKRPEKPVPPPPP). The span at 341 to 351 (PPPPAKAPAPK) shows a compositional bias: pro residues. The span at 356-379 (AAEKKYFSLKPEEKDEKSTLEQKP) shows a compositional bias: basic and acidic residues. Residues 385–395 (PQVPPKKPTPP) are compositionally biased toward pro residues. Phosphoserine is present on residues Ser-458, Ser-463, Ser-469, Ser-510, and Ser-514. Lys-523 participates in a covalent cross-link: Glycyl lysine isopeptide (Lys-Gly) (interchain with G-Cter in SUMO2). Residue Thr-565 is modified to Phosphothreonine. Residues 577–638 (DVKKNSLDEL…IEKLKKAVLS (62 aa)) adopt a coiled-coil conformation. Ser-582 is subject to Phosphoserine.

In terms of assembly, homodimer. Interacts with F-actin, PKD2, NPHS1 and NPHS2. Interacts with WTIP. Interacts with DDN; interaction is direct. Interacts (via SH3 2 domain) with CBL (via phosphorylated C-terminus). Interacts with BCAR1/p130Cas (via SH3 domain). Interacts with MVB12A and ARHGAP17. Interacts with ANLN, CD2 and CBLB. Interacts with PDCD6IP and TSG101. Interacts with RIN3. Interacts directly with RET (inactive) and CBLC; upon RET activation by GDNF suggested to dissociate from RET as CBLC:CD2AP complex. Interacts with CGNL1 and SH3BP1; probably part of a complex at cell junctions. Interacts with CAPZA1. As to quaternary structure, (Microbial infection) Interacts (via SH3 domains) with Chikungunya virus non-structural protein 3 (via C-terminus); this interaction plays a role in initiation of viral replication. Phosphorylated on tyrosine residues; probably by c-Abl, Fyn and c-Src. Widely expressed in fetal and adult tissues.

It is found in the cytoplasm. Its subcellular location is the cytoskeleton. The protein resides in the cell projection. It localises to the ruffle. The protein localises to the cell junction. Seems to act as an adapter protein between membrane proteins and the actin cytoskeleton. In collaboration with CBLC, modulates the rate of RET turnover and may act as regulatory checkpoint that limits the potency of GDNF on neuronal survival. Controls CBLC function, converting it from an inhibitor to a promoter of RET degradation. May play a role in receptor clustering and cytoskeletal polarity in the junction between T-cell and antigen-presenting cell. May anchor the podocyte slit diaphragm to the actin cytoskeleton in renal glomerolus. Also required for cytokinesis. Plays a role in epithelial cell junctions formation. In Homo sapiens (Human), this protein is CD2-associated protein (CD2AP).